A 162-amino-acid polypeptide reads, in one-letter code: Crossover junction endodeoxyribonuclease RuvC (162 aa).

Catalysis depends on residues Asp-8, Glu-69, and His-141. Asp-8, Glu-69, and His-141 together coordinate Mg(2+).

This sequence belongs to the RuvC family. As to quaternary structure, homodimer which binds Holliday junction (HJ) DNA. The HJ becomes 2-fold symmetrical on binding to RuvC with unstacked arms; it has a different conformation from HJ DNA in complex with RuvA. In the full resolvosome a probable DNA-RuvA(4)-RuvB(12)-RuvC(2) complex forms which resolves the HJ. It depends on Mg(2+) as a cofactor.

Its subcellular location is the cytoplasm. It carries out the reaction Endonucleolytic cleavage at a junction such as a reciprocal single-stranded crossover between two homologous DNA duplexes (Holliday junction).. Its function is as follows. The RuvA-RuvB-RuvC complex processes Holliday junction (HJ) DNA during genetic recombination and DNA repair. Endonuclease that resolves HJ intermediates. Cleaves cruciform DNA by making single-stranded nicks across the HJ at symmetrical positions within the homologous arms, yielding a 5'-phosphate and a 3'-hydroxyl group; requires a central core of homology in the junction. The consensus cleavage sequence is 5'-(A/T)TT(C/G)-3'. Cleavage occurs on the 3'-side of the TT dinucleotide at the point of strand exchange. HJ branch migration catalyzed by RuvA-RuvB allows RuvC to scan DNA until it finds its consensus sequence, where it cleaves and resolves the cruciform DNA. This Wolbachia sp. subsp. Drosophila simulans (strain wRi) protein is Crossover junction endodeoxyribonuclease RuvC.